The primary structure comprises 562 residues: Delta-1-pyrroline-5-carboxylate dehydrogenase, mitochondrial (562 aa).

The N-terminal 23 residues, 1-23 (MLPLPSLRRSLLSHAWRGAGLRW), are a transit peptide targeting the mitochondrion. Lys-30 is modified (N6-succinyllysine). Ser-43 carries the post-translational modification Phosphoserine. Position 51 is an N6-acetyllysine (Lys-51). Residues Lys-92, Lys-98, Lys-113, Lys-129, and Lys-174 each carry the N6-acetyllysine; alternate modification. N6-succinyllysine; alternate is present on residues Lys-92, Lys-98, Lys-113, Lys-129, and Lys-174. NAD(+) is bound by residues Ser-207, Lys-232, and 285-289 (GSVPT). Residue Glu-313 is the Proton acceptor of the active site. Lys-317 is modified (N6-acetyllysine). An N6-succinyllysine modification is found at Lys-346. Residue Cys-347 is the Nucleophile of the active site. An N6-acetyllysine; alternate modification is found at Lys-357. Lys-357 is modified (N6-succinyllysine; alternate). N6-acetyllysine is present on residues Lys-364 and Lys-375. Lys-394 carries the post-translational modification N6-succinyllysine. Glu-446 contacts NAD(+). Lys-461 is modified (N6-acetyllysine). Position 508 is an N6-acetyllysine; alternate (Lys-508). Lys-508 carries the N6-succinyllysine; alternate modification. Ser-512 provides a ligand contact to substrate. Lys-530 and Lys-551 each carry N6-acetyllysine.

The protein belongs to the aldehyde dehydrogenase family. As to quaternary structure, homodimer. Post-translationally, acetylation of Lys-98, Lys-113 and Lys-401 is observed in liver mitochondria from fasted mice but not from fed mice.

It localises to the mitochondrion matrix. The enzyme catalyses L-glutamate 5-semialdehyde + NAD(+) + H2O = L-glutamate + NADH + 2 H(+). Its pathway is amino-acid degradation; L-proline degradation into L-glutamate; L-glutamate from L-proline: step 2/2. Irreversible conversion of delta-1-pyrroline-5-carboxylate (P5C), derived either from proline or ornithine, to glutamate. This is a necessary step in the pathway interconnecting the urea and tricarboxylic acid cycles. The preferred substrate is glutamic gamma-semialdehyde, other substrates include succinic, glutaric and adipic semialdehydes. The protein is Delta-1-pyrroline-5-carboxylate dehydrogenase, mitochondrial (Aldh4a1) of Mus musculus (Mouse).